Reading from the N-terminus, the 481-residue chain is Glutamate--tRNA ligase (481 aa).

The 'HIGH' region signature appears at 9 to 19 (PSPTGNLHIGT). The short motif at 247 to 251 (KLSKR) is the 'KMSKS' region element. Lysine 250 lines the ATP pocket.

It belongs to the class-I aminoacyl-tRNA synthetase family. Glutamate--tRNA ligase type 1 subfamily. Monomer.

It localises to the cytoplasm. The enzyme catalyses tRNA(Glu) + L-glutamate + ATP = L-glutamyl-tRNA(Glu) + AMP + diphosphate. Its function is as follows. Catalyzes the attachment of glutamate to tRNA(Glu) in a two-step reaction: glutamate is first activated by ATP to form Glu-AMP and then transferred to the acceptor end of tRNA(Glu). The sequence is that of Glutamate--tRNA ligase from Trichormus variabilis (strain ATCC 29413 / PCC 7937) (Anabaena variabilis).